The following is a 3564-amino-acid chain: Sushi, von Willebrand factor type A, EGF and pentraxin domain-containing protein 1 (3564 aa).

Residues 1–17 (MWTRLAFCCWALALVSG) form the signal peptide. The region spanning 84–265 (ELVFLVDESS…LARRALHEDL (182 aa)) is the VWFA domain. N187 is a glycosylation site (N-linked (GlcNAc...) asparagine). Sushi domains follow at residues 377–436 (VHCP…FCRV), 437–496 (RTCP…RCVE), and 497–561 (RHCA…VCKD). Intrachain disulfides connect C379/C421, C407/C434, C439/C481, C467/C494, C499/C544, and C530/C559. HYR domains follow at residues 560–644 (KDVE…KVID) and 645–724 (VEPP…VIKG). The Sushi 4 domain occupies 725-789 (SPCEVPFTPV…YSTEWPDCAI (65 aa)). Intrachain disulfides connect C727-C769, C753-C787, C1192-C1203, C1197-C1212, C1214-C1223, C1230-C1241, C1235-C1250, C1252-C1261, C1268-C1279, C1273-C1288, C1290-C1299, C1306-C1317, C1311-C1326, C1328-C1337, C1344-C1355, C1349-C1364, C1366-C1375, C1382-C1393, C1387-C1402, and C1404-C1413. The 37-residue stretch at 1188-1224 (VFHECFLNPCHNSGTCQQLGRGYVCLCPPGYTGLKCE) folds into the EGF-like 1 domain. The region spanning 1226-1262 (DIDECSSLPCLNGGICRDKVGGFTCECSSGYTGQICE) is the EGF-like 2; calcium-binding domain. An EGF-like 3; calcium-binding domain is found at 1264-1300 (NINECSSSPCLNKGTCTDGLASYRCTCVSGYVGVHCE). Residues 1302–1338 (DVNECQSSPCLNNAVCKDQVGGFSCKCPPGFLGTRCE) enclose the EGF-like 4; calcium-binding domain. An EGF-like 5; calcium-binding domain is found at 1340–1376 (NVDECLSQPCQNGATCKDGANSFRCQCPAGFTGPHCE). The EGF-like 6; calcium-binding domain occupies 1378–1414 (NINECQSNPCRNQATCVDELNSYSCKCRPGFSGRRCE). A Pentraxin (PTX) domain is found at 1419–1623 (SGFNLDFEVS…VKVDSSSIFC (205 aa)). Sushi domains follow at residues 1624–1682 (SDCP…HCER) and 1683–1740 (IRCG…SCLD). 35 disulfide bridges follow: C1626/C1667, C1653/C1680, C1685/C1725, C1711/C1738, C1744/C1756, C1750/C1765, C1767/C1778, C1784/C1824, C1810/C1837, C1842/C1882, C1868/C1895, C1900/C1940, C1926/C1953, C1958/C1998, C1984/C2011, C2016/C2056, C2042/C2073, C2078/C2121, C2107/C2136, C2141/C2181, C2167/C2194, C2199/C2240, C2226/C2254, C2259/C2299, C2285/C2313, C2318/C2358, C2344/C2371, C2376/C2417, C2403/C2430, C2435/C2475, C2461/C2488, C2493/C2533, C2519/C2546, C2551/C2591, and C2577/C2603. Positions 1740–1779 (DVDECAVGSDCSEHASCLNTNGSYICSCKPPYTGDGKNCA) constitute an EGF-like 7; calcium-binding domain. N-linked (GlcNAc...) asparagine glycosylation occurs at N1760. 14 consecutive Sushi domains span residues 1776-1839 (KNCA…SCEA), 1840-1897 (ISCG…VCEL), 1898-1955 (VKCS…SCQL), 1956-2013 (VSCG…QCLA), 2014-2075 (VSCD…RCIA), 2076-2138 (HFCE…QCIP), 2139-2196 (VRCG…TCHP), 2197-2256 (VSCN…SCTP), 2257-2315 (LNCG…KCVP), 2316-2373 (TKCA…VCKL), 2374-2432 (VLCQ…ECVP), 2433-2490 (VECP…MCRP), 2491-2548 (IECP…SCNA), and 2549-2605 (IHCS…TCVP). The important for the interaction with integrin ITGA9:ITGB1 stretch occupies residues 2634–2641 (DMMEVPYL). 14 Sushi domains span residues 2659–2708 (EESL…SCIS), 2709–2766 (IECD…RCEV), 2767–2824 (ISCS…VCLP), 2825–2882 (VDCG…SCVP), 2883–2940 (VRCP…ICKP), 2941–2998 (ATCG…SCLP), 2999–3054 (CTCS…LCEH), 3055–3112 (ADCG…TCEP), 3113–3171 (VSCG…NCSP), 3172–3231 (KTCP…SCIP), 3232–3289 (VVCG…VCRE), 3290–3347 (SRCE…LCKP), 3348–3406 (NPCP…RCEK), and 3407–3463 (ISCG…ICRA). 33 disulfide bridges follow: C2679-C2706, C2711-C2751, C2737-C2764, C2769-C2809, C2795-C2822, C2827-C2867, C2853-C2880, C2885-C2925, C2911-C2938, C2943-C2983, C2969-C2996, C3001-C3040, C3026-C3052, C3057-C3097, C3083-C3110, C3115-C3156, C3141-C3169, C3174-C3214, C3200-C3229, C3234-C3274, C3260-C3287, C3292-C3332, C3318-C3345, C3350-C3391, C3377-C3404, C3409-C3449, C3435-C3461, C3497-C3507, C3501-C3513, C3515-C3524, C3529-C3539, C3533-C3545, and C3547-C3556. EGF-like domains follow at residues 3493-3525 (EEPI…SRCH) and 3526-3557 (TATC…HDCS).

As to quaternary structure, interacts (via Sushi domain 21) with ITGA9:ITGB1; thereby inhibits Ca(2+) intracellular signaling and as a result represses vasocontraction. Interacts (via Sushi domain 21) with ITGA4:ITGB1; thereby inhibits Ca(2+) intracellular signaling and as a result represses vasocontraction. Interacts with ANGPT1 and ANGPT2. Interacts with PEAR1 (via extracellular domain). Interacts with HSPG2, TLN1, FN1, COPA, CCT2, IQGAP1, LAMC1 and NID1. Interacts (via C-terminus) with TIE1.

It localises to the secreted. Its subcellular location is the nucleus. The protein localises to the cytoplasm. It is found in the membrane. Functionally, required for morphological development, cell alignment and migration of lymphatic endothelial cells during embryonic development, potentially via modulation of ANGPT2-TIE1 signaling and subsequent activation of FOXC2 transcription. Required for embryonic lymphatic vascular development, via mediating the correct formation of the first lymphovenous contact site and tight association of the lymphatic endothelium with the venous endothelium. Represses PRKCA-mediated L-type voltage-gated channel Ca(2+) influx and ROCK-mediated calcium sensitivity in vascular smooth muscle cells, via its interaction with integrins, thereby inhibiting vasocontraction. Promotes platelet activation, via its interaction with PEAR1 and subsequent activation of AKT/mTOR signaling. Plays a role in epidermal development and keratinocyte differentiation, independent of cell-cell adhesion. May play a role in initial cell attachment of stromal osteogenic cells. May promote myoblast cell adhesion when in the presence of integrin ITGA9:ITGB1. This is Sushi, von Willebrand factor type A, EGF and pentraxin domain-containing protein 1 (Svep1) from Rattus norvegicus (Rat).